Consider the following 282-residue polypeptide: Elongation factor Ts (282 aa).

The segment at 79–82 (TDFV) is involved in Mg(2+) ion dislocation from EF-Tu.

The protein belongs to the EF-Ts family.

It is found in the cytoplasm. Functionally, associates with the EF-Tu.GDP complex and induces the exchange of GDP to GTP. It remains bound to the aminoacyl-tRNA.EF-Tu.GTP complex up to the GTP hydrolysis stage on the ribosome. This chain is Elongation factor Ts, found in Shewanella sediminis (strain HAW-EB3).